We begin with the raw amino-acid sequence, 569 residues long: Urease subunit alpha (569 aa).

In terms of domain architecture, Urease spans 131 to 569; that stretch reads GSIDTHIHFI…VPMAQRYFLL (439 aa). His-136, His-138, and Lys-219 together coordinate Ni(2+). An N6-carboxylysine modification is found at Lys-219. His-221 serves as a coordination point for substrate. The Ni(2+) site is built by His-248 and His-274. The active-site Proton donor is the His-322. Asp-362 serves as a coordination point for Ni(2+).

The protein belongs to the metallo-dependent hydrolases superfamily. Urease alpha subunit family. Heterotrimer of UreA (gamma), UreB (beta) and UreC (alpha) subunits. Three heterotrimers associate to form the active enzyme. The cofactor is Ni cation. Post-translationally, carboxylation allows a single lysine to coordinate two nickel ions.

It is found in the cytoplasm. It carries out the reaction urea + 2 H2O + H(+) = hydrogencarbonate + 2 NH4(+). The protein operates within nitrogen metabolism; urea degradation; CO(2) and NH(3) from urea (urease route): step 1/1. In Prochlorococcus marinus (strain AS9601), this protein is Urease subunit alpha.